A 151-amino-acid polypeptide reads, in one-letter code: MGSDDQSAGDRIQKGFQINYMILRDADSGKIIWQENKDFSAPDQEHEARVPVKILDMRAVSREINFSTIESMENFRLDQKVLFKGRIMEEWFFEMGFVGANTTNTWQSTIEAAPESQMMPAKVLNGNVTIQTSFYDNETLITKSVVRLYYI.

Belongs to the PDE6D/unc-119 family. Interacts with Pde6.

The protein resides in the nucleus. It localises to the cytoplasm. This Drosophila simulans (Fruit fly) protein is Probable cGMP 3',5'-cyclic phosphodiesterase subunit delta.